An 860-amino-acid chain; its full sequence is Nuclear cap-binding protein complex subunit 1 (860 aa).

The region spanning 36-271 is the MIF4G domain; the sequence is CKDMLPDIRT…SNVKNALAND (236 aa).

This sequence belongs to the NCBP1 family. In terms of assembly, component of the nuclear cap-binding complex (CBC).

Its subcellular location is the nucleus. Component of the cap-binding complex (CBC) involved in the nuclear export of capped U snRNAs. The CBC complex is required for efficient pre-mRNA splicing through efficient commitment complex and spliceosome formation; and involved in rRNA processing at sites A0, A1 and A2. This is Nuclear cap-binding protein complex subunit 1 (CBC1) from Eremothecium gossypii (strain ATCC 10895 / CBS 109.51 / FGSC 9923 / NRRL Y-1056) (Yeast).